The sequence spans 125 residues: uncharacterized protein (125 aa).

Polar residues predominate over residues 1–33 (MLPHQNSSYTRQGTNDAQANDMRSPSQLPTSVN). 2 disordered regions span residues 1–35 (MLPH…VNIE) and 44–63 (SEKL…KKHT). The segment covering 53–63 (NRSRSGIKKHT) has biased composition (basic residues).

This is an uncharacterized protein from Schizosaccharomyces pombe (strain 972 / ATCC 24843) (Fission yeast).